Reading from the N-terminus, the 211-residue chain is Probable nicotinate-nucleotide adenylyltransferase (211 aa).

The protein belongs to the NadD family.

It catalyses the reaction nicotinate beta-D-ribonucleotide + ATP + H(+) = deamido-NAD(+) + diphosphate. Its pathway is cofactor biosynthesis; NAD(+) biosynthesis; deamido-NAD(+) from nicotinate D-ribonucleotide: step 1/1. Catalyzes the reversible adenylation of nicotinate mononucleotide (NaMN) to nicotinic acid adenine dinucleotide (NaAD). This chain is Probable nicotinate-nucleotide adenylyltransferase, found in Cellvibrio japonicus (strain Ueda107) (Pseudomonas fluorescens subsp. cellulosa).